The primary structure comprises 385 residues: Flap endonuclease 1 (385 aa).

Residues 1–104 (MGILGLSKLI…GELAKRAERR (104 aa)) are N-domain. Residue aspartate 34 coordinates Mg(2+). Positions 47 and 70 each coordinate DNA. Mg(2+) is bound by residues aspartate 86, glutamate 158, glutamate 160, aspartate 179, and aspartate 181. Positions 122 to 253 (GIEKFNRRLV…KRAIELINTY (132 aa)) are I-domain. Position 158 (glutamate 158) interacts with DNA. Glycine 231 and aspartate 233 together coordinate DNA. Aspartate 233 is a Mg(2+) binding site. The interaction with PCNA stretch occupies residues 336-344 (TQVRLDSFF). Residues 346 to 385 (TLPSTPNATNAAKRKAEEAKKSANNKKAKTSGGGRGRRPK) form a disordered region. The segment covering 368 to 385 (ANNKKAKTSGGGRGRRPK) has biased composition (basic residues).

This sequence belongs to the XPG/RAD2 endonuclease family. FEN1 subfamily. In terms of assembly, interacts with PCNA. Three molecules of FEN1 bind to one PCNA trimer with each molecule binding to one PCNA monomer. PCNA stimulates the nuclease activity without altering cleavage specificity. The cofactor is Mg(2+). In terms of processing, phosphorylated. Phosphorylation upon DNA damage induces relocalization to the nuclear plasma.

It localises to the nucleus. It is found in the nucleolus. Its subcellular location is the nucleoplasm. The protein resides in the mitochondrion. Functionally, structure-specific nuclease with 5'-flap endonuclease and 5'-3' exonuclease activities involved in DNA replication and repair. During DNA replication, cleaves the 5'-overhanging flap structure that is generated by displacement synthesis when DNA polymerase encounters the 5'-end of a downstream Okazaki fragment. It enters the flap from the 5'-end and then tracks to cleave the flap base, leaving a nick for ligation. Also involved in the long patch base excision repair (LP-BER) pathway, by cleaving within the apurinic/apyrimidinic (AP) site-terminated flap. Acts as a genome stabilization factor that prevents flaps from equilibrating into structures that lead to duplications and deletions. Also possesses 5'-3' exonuclease activity on nicked or gapped double-stranded DNA, and exhibits RNase H activity. Also involved in replication and repair of rDNA and in repairing mitochondrial DNA. The chain is Flap endonuclease 1 from Drosophila simulans (Fruit fly).